The chain runs to 534 residues: CTP synthase (534 aa).

The amidoligase domain stretch occupies residues 1 to 267; sequence MTKYIFVTGG…DQIVCDHLKL (267 aa). Residue S13 participates in CTP binding. S13 serves as a coordination point for UTP. Position 14–19 (14–19) interacts with ATP; sequence SIGKGI. L-glutamine is bound at residue Y54. D71 lines the ATP pocket. Mg(2+)-binding residues include D71 and E141. Residues 148-150, 188-193, and K224 each bind CTP; these read DIE and KTKPTQ. UTP is bound by residues 188 to 193 and K224; that span reads KTKPTQ. A Glutamine amidotransferase type-1 domain is found at 292–534; the sequence is KIALVGKYVE…FVTAAVENAK (243 aa). G354 lines the L-glutamine pocket. The active-site Nucleophile; for glutamine hydrolysis is the C381. Residues 382-385, E405, and R463 contribute to the L-glutamine site; that span reads LGMQ. Catalysis depends on residues H508 and E510.

The protein belongs to the CTP synthase family. Homotetramer.

It catalyses the reaction UTP + L-glutamine + ATP + H2O = CTP + L-glutamate + ADP + phosphate + 2 H(+). It carries out the reaction L-glutamine + H2O = L-glutamate + NH4(+). The catalysed reaction is UTP + NH4(+) + ATP = CTP + ADP + phosphate + 2 H(+). It functions in the pathway pyrimidine metabolism; CTP biosynthesis via de novo pathway; CTP from UDP: step 2/2. Allosterically activated by GTP, when glutamine is the substrate; GTP has no effect on the reaction when ammonia is the substrate. The allosteric effector GTP functions by stabilizing the protein conformation that binds the tetrahedral intermediate(s) formed during glutamine hydrolysis. Inhibited by the product CTP, via allosteric rather than competitive inhibition. Catalyzes the ATP-dependent amination of UTP to CTP with either L-glutamine or ammonia as the source of nitrogen. Regulates intracellular CTP levels through interactions with the four ribonucleotide triphosphates. In Streptococcus thermophilus (strain ATCC BAA-250 / LMG 18311), this protein is CTP synthase.